We begin with the raw amino-acid sequence, 475 residues long: ADP-ribosyltransferase toxin AexT (475 aa).

The Bacterial Rho-GAP domain occupies 93 to 226 (VSPEDLQRLM…LQRAVKAEVA (134 aa)). Positions 260-436 (EGLQEQFGLE…RVLEEASLGE (177 aa)) constitute a TR mART core domain. Residues Arg-340, Ser-364, and Glu-403 contribute to the active site.

It is found in the secreted. Its function is as follows. Directly involved in the toxicity for RTG-2 (rainbow trout gonad) fish cells. This Aeromonas salmonicida protein is ADP-ribosyltransferase toxin AexT (aexT).